A 444-amino-acid polypeptide reads, in one-letter code: Methylenetetrahydrofolate--tRNA-(uracil-5-)-methyltransferase TrmFO (444 aa).

10 to 15 (GAGLAG) lines the FAD pocket.

This sequence belongs to the MnmG family. TrmFO subfamily. It depends on FAD as a cofactor.

Its subcellular location is the cytoplasm. The enzyme catalyses uridine(54) in tRNA + (6R)-5,10-methylene-5,6,7,8-tetrahydrofolate + NADH + H(+) = 5-methyluridine(54) in tRNA + (6S)-5,6,7,8-tetrahydrofolate + NAD(+). It carries out the reaction uridine(54) in tRNA + (6R)-5,10-methylene-5,6,7,8-tetrahydrofolate + NADPH + H(+) = 5-methyluridine(54) in tRNA + (6S)-5,6,7,8-tetrahydrofolate + NADP(+). Catalyzes the folate-dependent formation of 5-methyl-uridine at position 54 (M-5-U54) in all tRNAs. In Streptococcus gordonii (strain Challis / ATCC 35105 / BCRC 15272 / CH1 / DL1 / V288), this protein is Methylenetetrahydrofolate--tRNA-(uracil-5-)-methyltransferase TrmFO.